A 124-amino-acid chain; its full sequence is Large ribosomal subunit protein bL12 (124 aa).

This sequence belongs to the bacterial ribosomal protein bL12 family. As to quaternary structure, homodimer. Part of the ribosomal stalk of the 50S ribosomal subunit. Forms a multimeric L10(L12)X complex, where L10 forms an elongated spine to which 2 to 4 L12 dimers bind in a sequential fashion. Binds GTP-bound translation factors.

Forms part of the ribosomal stalk which helps the ribosome interact with GTP-bound translation factors. Is thus essential for accurate translation. This Cupriavidus taiwanensis (strain DSM 17343 / BCRC 17206 / CCUG 44338 / CIP 107171 / LMG 19424 / R1) (Ralstonia taiwanensis (strain LMG 19424)) protein is Large ribosomal subunit protein bL12.